A 213-amino-acid chain; its full sequence is MISHLLPTTSLTIHMPSIILYPIYFDKSRPRRFRCVPKDKAILNPLAKNIADVVRDLGYKCKLEPLKTHPADWVNPGRVEMVLPEKIQKKYVINEIAKVLLLRPTVKTDPLSLPIQNVPARLPENPPAYPKGVLGNTILPLHSPALSGGGISENMFQEMMQEMQKQPGLAGGMNPMAALAGMGGPAPPMPTPQASSSQRKQKSIEPEYDLDLE.

Residues 176–213 (MAALAGMGGPAPPMPTPQASSSQRKQKSIEPEYDLDLE) are disordered.

Belongs to the SRP19 family. In terms of assembly, fungal signal recognition particle consists of a 7S RNA molecule (scR1) and at least six protein subunits: srp72, srp68, srp54, sec65, srp21 and srp14.

It is found in the cytoplasm. Its subcellular location is the nucleus. Functionally, signal-recognition-particle assembly has a crucial role in targeting secretory proteins to the rough endoplasmic reticulum membrane. It must be involved intimately in the translocation of a wide variety of protein substrates. The sequence is that of Signal recognition particle sec65 subunit (sec65) from Schizosaccharomyces pombe (strain 972 / ATCC 24843) (Fission yeast).